Consider the following 205-residue polypeptide: Coatomer subunit zeta-2 (205 aa).

Positions 1–12 are enriched in basic and acidic residues; sequence MQRPEAWPRPHP. The segment at 1–33 is disordered; sequence MQRPEAWPRPHPGEGASAAQAGGAAPPTRATEQ. Residues 13–30 show a composition bias toward low complexity; sequence GEGASAAQAGGAAPPTRA.

This sequence belongs to the adaptor complexes small subunit family. As to quaternary structure, oligomeric complex.

It is found in the cytoplasm. It localises to the cytosol. Its subcellular location is the endoplasmic reticulum-Golgi intermediate compartment membrane. The protein resides in the golgi apparatus membrane. The protein localises to the cytoplasmic vesicle. It is found in the COPI-coated vesicle membrane. Its function is as follows. The coatomer is a cytosolic protein complex that binds to dilysine motifs and reversibly associates with Golgi non-clathrin-coated vesicles, which further mediate biosynthetic protein transport from the ER, via the Golgi up to the trans Golgi network. Coatomer complex is required for budding from Golgi membranes, and is essential for the retrograde Golgi-to-ER transport of dilysine-tagged proteins. The zeta subunit may be involved in regulating the coat assembly and, hence, the rate of biosynthetic protein transport due to its association-dissociation properties with the coatomer complex. The chain is Coatomer subunit zeta-2 (Copz2) from Mus musculus (Mouse).